The chain runs to 447 residues: Argininosuccinate synthase (447 aa).

ATP-binding positions include 17–25 and Ala-43; that span reads AFSGGLDTS. L-citrulline is bound at residue Tyr-99. Residues Gly-129 and Thr-131 each coordinate ATP. L-aspartate-binding residues include Thr-131, Asn-135, and Asp-136. L-citrulline is bound at residue Asn-135. Asp-136 provides a ligand contact to ATP. Residues Arg-139 and Ser-192 each contribute to the L-citrulline site. ATP is bound at residue Asp-194. Positions 201, 203, and 280 each coordinate L-citrulline.

It belongs to the argininosuccinate synthase family. Type 2 subfamily. As to quaternary structure, homotetramer.

It is found in the cytoplasm. The catalysed reaction is L-citrulline + L-aspartate + ATP = 2-(N(omega)-L-arginino)succinate + AMP + diphosphate + H(+). It participates in amino-acid biosynthesis; L-arginine biosynthesis; L-arginine from L-ornithine and carbamoyl phosphate: step 2/3. This chain is Argininosuccinate synthase, found in Salmonella schwarzengrund (strain CVM19633).